The sequence spans 619 residues: Chaperone protein HscA homolog (619 aa).

Belongs to the heat shock protein 70 family.

In terms of biological role, chaperone involved in the maturation of iron-sulfur cluster-containing proteins. Has a low intrinsic ATPase activity which is markedly stimulated by HscB. This chain is Chaperone protein HscA homolog, found in Shewanella frigidimarina (strain NCIMB 400).